The chain runs to 59 residues: MAVQQNKKSRSRKGMRRSHDRVAVPAVVYCACGEPTAPHRACPSCGTYKGRQVTKQDNE.

The disordered stretch occupies residues 1 to 20 (MAVQQNKKSRSRKGMRRSHD). The span at 7–19 (KKSRSRKGMRRSH) shows a compositional bias: basic residues.

The protein belongs to the bacterial ribosomal protein bL32 family.

The protein is Large ribosomal subunit protein bL32 of Nitratidesulfovibrio vulgaris (strain ATCC 29579 / DSM 644 / CCUG 34227 / NCIMB 8303 / VKM B-1760 / Hildenborough) (Desulfovibrio vulgaris).